A 202-amino-acid polypeptide reads, in one-letter code: Neuroligin-3 (202 aa).

Topologically, residues 1–202 (RYGSPTYFYA…TGTRMQGHSW (202 aa)) are extracellular. The cysteines at positions 15 and 49 are disulfide-linked. Residue asparagine 50 is glycosylated (N-linked (GlcNAc...) asparagine). A disordered region spans residues 154–202 (LRIPPTAPTSPAGPMARPGAPSGQPSHLPTATRMPRGPGTGTRMQGHSW).

The protein belongs to the type-B carboxylesterase/lipase family. As to quaternary structure, homodimer, and heterodimer with NLGN1 and NLGN2. Interacts with neurexins NRXN1, NRXN2 and NRXN3. Interaction with neurexins is mediated by heparan sulfate glycan modification on neurexin. Interacts (via its C-terminus) with DLG4/PSD-95 (via PDZ domain 3).

The protein localises to the cell membrane. It localises to the synapse. In terms of biological role, cell surface protein involved in cell-cell-interactions via its interactions with neurexin family members. Plays a role in synapse function and synaptic signal transmission, and probably mediates its effects by recruiting and clustering other synaptic proteins. May promote the initial formation of synapses, but is not essential for this. May also play a role in glia-glia or glia-neuron interactions in the developing peripheral nervous system. This is Neuroligin-3 (NLGN3) from Macaca mulatta (Rhesus macaque).